Reading from the N-terminus, the 293-residue chain is Pyridoxal 5'-phosphate synthase subunit PdxS (293 aa).

D-ribose 5-phosphate is bound at residue Asp-25. Lys-82 (schiff-base intermediate with D-ribose 5-phosphate) is an active-site residue. Residue Gly-154 coordinates D-ribose 5-phosphate. Arg-166 is a binding site for D-glyceraldehyde 3-phosphate. D-ribose 5-phosphate is bound by residues Gly-215 and 236 to 237; that span reads GS.

Belongs to the PdxS/SNZ family. In terms of assembly, in the presence of PdxT, forms a dodecamer of heterodimers.

The catalysed reaction is aldehydo-D-ribose 5-phosphate + D-glyceraldehyde 3-phosphate + L-glutamine = pyridoxal 5'-phosphate + L-glutamate + phosphate + 3 H2O + H(+). Its pathway is cofactor biosynthesis; pyridoxal 5'-phosphate biosynthesis. In terms of biological role, catalyzes the formation of pyridoxal 5'-phosphate from ribose 5-phosphate (RBP), glyceraldehyde 3-phosphate (G3P) and ammonia. The ammonia is provided by the PdxT subunit. Can also use ribulose 5-phosphate and dihydroxyacetone phosphate as substrates, resulting from enzyme-catalyzed isomerization of RBP and G3P, respectively. This chain is Pyridoxal 5'-phosphate synthase subunit PdxS, found in Thermotoga petrophila (strain ATCC BAA-488 / DSM 13995 / JCM 10881 / RKU-1).